We begin with the raw amino-acid sequence, 432 residues long: Glutamyl-tRNA reductase (432 aa).

Residues 49–52, Ser-107, 112–114, and Gln-118 contribute to the substrate site; these read TCNR and ETQ. Residue Cys-50 is the Nucleophile of the active site. 186–191 serves as a coordination point for NADP(+); it reads GAGEMG.

The protein belongs to the glutamyl-tRNA reductase family. In terms of assembly, homodimer.

It catalyses the reaction (S)-4-amino-5-oxopentanoate + tRNA(Glu) + NADP(+) = L-glutamyl-tRNA(Glu) + NADPH + H(+). The protein operates within porphyrin-containing compound metabolism; protoporphyrin-IX biosynthesis; 5-aminolevulinate from L-glutamyl-tRNA(Glu): step 1/2. Catalyzes the NADPH-dependent reduction of glutamyl-tRNA(Glu) to glutamate 1-semialdehyde (GSA). This Campylobacter jejuni subsp. doylei (strain ATCC BAA-1458 / RM4099 / 269.97) protein is Glutamyl-tRNA reductase.